Consider the following 291-residue polypeptide: MAAKLLDDAGIDVRVLINDADDPIAEHSVLGRFTHVRHAADAADGAELVLVLGGDGTFLRAADMAHAVDLPVLGINLGHVGFLAEWESDSLEEALKRVIDRDYRIEDRMTLTVVVLDGGGEEIGRGWALNEVSIENLNRRGVLDATLEVDARPVASFGCDGVLISTPTGSTAYAFSAGGPVLWPELDAILVVPNNAHALFTKPLVVSPKSTVAVESNSDTSAAMAVMDGFRPIPMPPGSRVEVTRGERPVRWVRLDSSPFTDRLVSKLRLPVTGWRGPQKQAENKDPRSAG.

D55 functions as the Proton acceptor in the catalytic mechanism. Residues 55–56, R60, 130–131, D160, and 171–176 each bind NAD(+); these read DG, NE, and TAYAFS.

Belongs to the NAD kinase family. A divalent metal cation is required as a cofactor.

It is found in the cytoplasm. The enzyme catalyses NAD(+) + ATP = ADP + NADP(+) + H(+). Functionally, involved in the regulation of the intracellular balance of NAD and NADP, and is a key enzyme in the biosynthesis of NADP. Catalyzes specifically the phosphorylation on 2'-hydroxyl of the adenosine moiety of NAD to yield NADP. This is NAD kinase from Corynebacterium glutamicum (strain ATCC 13032 / DSM 20300 / JCM 1318 / BCRC 11384 / CCUG 27702 / LMG 3730 / NBRC 12168 / NCIMB 10025 / NRRL B-2784 / 534).